The chain runs to 129 residues: MKQKIIGLTLAFFVLFLTAVAILFTVKVQRYLTTSLWAKLSEQTFLVFKNEQDEAQFNQVSWTNFQAETTKKEDKKAFRLYKKKISLEQLENENQQQLFQAVNLSINLKQGWYNITILLPSKALFETVF.

The helical transmembrane segment at 5 to 25 (IIGLTLAFFVLFLTAVAILFT) threads the bilayer.

The protein localises to the membrane. This is an uncharacterized protein from Mycoplasma pneumoniae (strain ATCC 29342 / M129 / Subtype 1) (Mycoplasmoides pneumoniae).